Here is an 85-residue protein sequence, read N- to C-terminus: Growth factor (85 aa).

The first 19 residues, 1–19 (MVPRDLVATLLCAMCIVQA), serve as a signal peptide directing secretion. The 45-residue stretch at 33-77 (RIKLCNDDYKNYCLNNGTCFTVALNNVSLNPFCACHINYVGSRCQ) folds into the EGF-like domain. 3 disulfides stabilise this stretch: Cys-37–Cys-51, Cys-45–Cys-65, and Cys-67–Cys-76. 2 N-linked (GlcNAc...) asparagine; by host glycosylation sites follow: Asn-48 and Asn-58.

It localises to the secreted. Stimulates the growth of some tissues. This is Growth factor (MGF) from Oryctolagus cuniculus (Rabbit).